Consider the following 587-residue polypeptide: MESNHKSGDGLSGTQKEAALRALIQRTGYSLVQENGQRKYGGPPPGWDAAPPERGCEIFIGKLPRDLFEDELIPLCEKIGKIYEMRMMMDFNGNNRGYAFVTFSNKLEAKNAIKQLNNYEIRNGRLLGVCASVDNCRLFVGGIPKTKKREEILSEMKKVTEGVVDVIVYPSAADKTKNRGFAFVEYESHRAAAMARRKLLPGRIQLWGHPIAVDWAEPEVEVDEDTMSSVKILYVRNLMLSTSEEMIEKEFNNIKPGAVERVKKIRDYAFVHFSNREDAVEAMKALNGKVLDGSPIEVTLAKPVDKDSYVRYTRGTGGRGTMLQGEYTYSLGQVYDPTTTYLGAPVFYAPQAYAAIPSLHFPATKGHLSNRAIIRAPSVRGAAGVRGLGGRGYLAYTGLGRGYQVKGDKREDKLYDILPGMELTPMNPVTLKPQGIKLAPQILEEICQKNNWGQPVYQLHSAIGQDQRQLFLYKITIPALASQNPAIHPFTPPKLSAYVDEAKTYAAEYTLQTLGIPTDGGDAGTMATAAAVATAFPGYAVPNATAPVSAAQLKQAVTLGQDLAAYTTYEVYPTFAVTARGDGYGAF.

RRM domains are found at residues 56–134 (CEIF…ASVD), 136–218 (CRLF…WAEP), and 231–303 (KILY…LAKP). The segment at 360 to 409 (HFPATKGHLSNRAIIRAPSVRGAAGVRGLGGRGYLAYTGLGRGYQVKGDK) is required for nuclear localization. Residue T491 is modified to Phosphothreonine.

In terms of assembly, part of the apolipoprotein B mRNA editing complex with APOBEC1. Interacts with TNPO2; TNPO2 may be responsible for transport of A1CF into the nucleus. Interacts with SYNCRIP. Interacts with CELF2/CUGBP2. Interacts with RBM47.

The protein localises to the nucleus. Its subcellular location is the endoplasmic reticulum. It is found in the cytoplasm. Essential component of the apolipoprotein B mRNA editing enzyme complex which is responsible for the postranscriptional editing of a CAA codon for Gln to a UAA codon for stop in APOB mRNA. Binds to APOB mRNA and is probably responsible for docking the catalytic subunit, APOBEC1, to the mRNA to allow it to deaminate its target cytosine. The complex also seems to protect the edited APOB mRNA from nonsense-mediated decay. This chain is APOBEC1 complementation factor (A1CF), found in Pongo abelii (Sumatran orangutan).